Here is a 309-residue protein sequence, read N- to C-terminus: Olfactory receptor 8A1 (309 aa).

The Extracellular portion of the chain corresponds to 1–28; that stretch reads MTAENQSTVTEFILGGLTNRPELQLPLF. Residues 29–49 traverse the membrane as a helical segment; the sequence is LLFLGIYVVTMVGNLGMITLI. Residues 50–56 are Cytoplasmic-facing; sequence GLNSQLH. A helical membrane pass occupies residues 57–77; the sequence is TPMYFFLSNLSLVDLCYSSVI. Residues 78 to 90 lie on the Extracellular side of the membrane; it reads TPKMLINFVSQRN. Residues 91–111 traverse the membrane as a helical segment; sequence LISYVGCMSQLYFFLVFVIAE. Cys-97 and Cys-188 are joined by a disulfide. Residues 112-133 are Cytoplasmic-facing; it reads CYMLTVMAYDRYVAICQPLLYN. The chain crosses the membrane as a helical span at residues 134–154; sequence IIMSPALCSLLVAFVYAVGLI. At 155-195 the chain is on the extracellular side; the sequence is GSAIETGLMLKLNYCEDLISHYFCDILPLMKLSCSSTYDVE. Residues 196–216 form a helical membrane-spanning segment; the sequence is MAVFFLAGFDIIVTSLTVLIS. Over 217-238 the chain is Cytoplasmic; the sequence is YAFILSSILRISSNEGRSKAFS. The chain crosses the membrane as a helical span at residues 239 to 259; it reads TCSSHFAAVGLFYGSTAFMYL. At 260-270 the chain is on the extracellular side; the sequence is KPSTASSLAQE. The helical transmembrane segment at 271-291 threads the bilayer; that stretch reads NVASVFYTTVIPMFNPLIYSL. Topologically, residues 292–309 are cytoplasmic; the sequence is RNKEVKTALDKTLRRKVF.

The protein belongs to the G-protein coupled receptor 1 family.

The protein resides in the cell membrane. Its function is as follows. Odorant receptor. In Mus musculus (Mouse), this protein is Olfactory receptor 8A1.